A 164-amino-acid polypeptide reads, in one-letter code: Pyruvoyl-dependent arginine decarboxylase (164 aa).

Pyruvic acid (Ser) is present on S52.

It belongs to the PdaD family. Pyruvate is required as a cofactor.

It catalyses the reaction L-arginine + H(+) = agmatine + CO2. The sequence is that of Pyruvoyl-dependent arginine decarboxylase from Methanococcus maripaludis (strain C6 / ATCC BAA-1332).